We begin with the raw amino-acid sequence, 322 residues long: Eukaryotic translation initiation factor 3 subunit I (322 aa).

WD repeat units follow at residues 4–43 (GHER…RLGT), 46–85 (GHQG…VIAS), 141–180 (MTES…KVVD), 184–223 (DHSA…CLKS), and 281–322 (GHFG…NIFE).

It belongs to the eIF-3 subunit I family. Component of the eukaryotic translation initiation factor 3 (eIF-3) complex. The eIF-3 complex interacts with pix.

It is found in the cytoplasm. Component of the eukaryotic translation initiation factor 3 (eIF-3) complex, which is involved in protein synthesis of a specialized repertoire of mRNAs and, together with other initiation factors, stimulates binding of mRNA and methionyl-tRNAi to the 40S ribosome. The eIF-3 complex specifically targets and initiates translation of a subset of mRNAs involved in cell proliferation. The sequence is that of Eukaryotic translation initiation factor 3 subunit I from Drosophila yakuba (Fruit fly).